Reading from the N-terminus, the 193-residue chain is Ion-translocating oxidoreductase complex subunit A (193 aa).

Transmembrane regions (helical) follow at residues 5-25 (ALLF…FLGL), 39-59 (IGMG…SWLI), 62-82 (FILV…LVLA), 102-122 (LLGI…VVLL), 134-154 (TIYG…FAAI), and 171-191 (SIAL…TGLV).

This sequence belongs to the NqrDE/RnfAE family. As to quaternary structure, the complex is composed of six subunits: RnfA, RnfB, RnfC, RnfD, RnfE and RnfG.

Its subcellular location is the cell inner membrane. Its function is as follows. Part of a membrane-bound complex that couples electron transfer with translocation of ions across the membrane. The protein is Ion-translocating oxidoreductase complex subunit A of Pectobacterium atrosepticum (strain SCRI 1043 / ATCC BAA-672) (Erwinia carotovora subsp. atroseptica).